We begin with the raw amino-acid sequence, 318 residues long: NADH-ubiquinone oxidoreductase chain 1 (318 aa).

8 helical membrane-spanning segments follow: residues 2 to 22, 69 to 89, 100 to 120, 147 to 167, 171 to 191, 222 to 242, 253 to 273, and 294 to 314; these read PMINLLLLILPTLIAMAFLML, ALYIIAPTLALTIALLLWTPL, LGLLFILATSSLTVYSILWSG, AIILLSVLLMSGSFNLSTLIT, HIWLLLPTWPLAMMWFISTLA, LFFMAEYVNIIMMNALTTMIF, ELYTTCFTIKTLLLTSLFLWI, and LPLTLTLLMWYISLSTMIASI.

Belongs to the complex I subunit 1 family. Core subunit of respiratory chain NADH dehydrogenase (Complex I) which is composed of 45 different subunits.

The protein resides in the mitochondrion inner membrane. It catalyses the reaction a ubiquinone + NADH + 5 H(+)(in) = a ubiquinol + NAD(+) + 4 H(+)(out). Functionally, core subunit of the mitochondrial membrane respiratory chain NADH dehydrogenase (Complex I) which catalyzes electron transfer from NADH through the respiratory chain, using ubiquinone as an electron acceptor. Essential for the catalytic activity and assembly of complex I. In Hylobates lar (Lar gibbon), this protein is NADH-ubiquinone oxidoreductase chain 1 (MT-ND1).